Consider the following 277-residue polypeptide: Energy-coupling factor transporter transmembrane protein EcfT (277 aa).

6 helical membrane passes run 39 to 59 (ITIL…YAII), 61 to 81 (FFCF…WNGV), 85 to 105 (IGLI…GHVF), 121 to 141 (AIYI…MTVT), 163 to 183 (VPVD…PTLF), and 254 to 274 (SKYD…LLIF).

This sequence belongs to the energy-coupling factor EcfT family. Forms a stable energy-coupling factor (ECF) transporter complex composed of 2 membrane-embedded substrate-binding proteins (S component), 2 ATP-binding proteins (A component) and 2 transmembrane proteins (T component). May be able to interact with more than 1 S component at a time.

The protein resides in the cell membrane. Transmembrane (T) component of an energy-coupling factor (ECF) ABC-transporter complex. Unlike classic ABC transporters this ECF transporter provides the energy necessary to transport a number of different substrates. In Lactobacillus helveticus (strain DPC 4571), this protein is Energy-coupling factor transporter transmembrane protein EcfT.